A 292-amino-acid chain; its full sequence is Bifunctional protein FolD 1 (292 aa).

NADP(+) is bound at residue 165 to 167; that stretch reads GRS.

This sequence belongs to the tetrahydrofolate dehydrogenase/cyclohydrolase family. Homodimer.

The enzyme catalyses (6R)-5,10-methylene-5,6,7,8-tetrahydrofolate + NADP(+) = (6R)-5,10-methenyltetrahydrofolate + NADPH. It carries out the reaction (6R)-5,10-methenyltetrahydrofolate + H2O = (6R)-10-formyltetrahydrofolate + H(+). It participates in one-carbon metabolism; tetrahydrofolate interconversion. Catalyzes the oxidation of 5,10-methylenetetrahydrofolate to 5,10-methenyltetrahydrofolate and then the hydrolysis of 5,10-methenyltetrahydrofolate to 10-formyltetrahydrofolate. This is Bifunctional protein FolD 1 from Myxococcus xanthus (strain DK1622).